Consider the following 227-residue polypeptide: N-acetyltransferase 8B (227 aa).

At 1-42 the chain is on the cytoplasmic side; the sequence is MAPYHIRKYQESDRKSVVGLLSGGMAEHAPATFRRLLKLPRT. The helical; Signal-anchor for type II membrane protein transmembrane segment at 43–63 threads the bilayer; the sequence is LILLLGGALALLLVSGSWILA. Residues 61-214 enclose the N-acetyltransferase domain; that stretch reads ILALVFSLSL…ARLVDLHTVH (154 aa). Residues 64-227 lie on the Lumenal side of the membrane; that stretch reads LVFSLSLLPA…HLPSAQAGRL (164 aa). At lysine 99 the chain carries N6-acetyllysine.

The protein belongs to the NAT8 family. In terms of processing, acetylation on Lys-99 modulates enzymatic activity.

The protein localises to the endoplasmic reticulum-Golgi intermediate compartment membrane. Its subcellular location is the endoplasmic reticulum membrane. It catalyses the reaction L-lysyl-[protein] + acetyl-CoA = N(6)-acetyl-L-lysyl-[protein] + CoA + H(+). Its activity is regulated as follows. Allosterically regulated by acetylation at residue Lys-99. Its function is as follows. Endoplasmic reticulum (ER)-membrane-bound lysine N-acetyltransferase catalyzing the N6-acetylation of lysine residues in the lumen of the ER in various proteins, including PROM1 and BACE1, using acetyl-CoA as acetyl donor. Thereby, may regulate apoptosis through the acetylation and the regulation of the expression of PROM1. Acetylates and stabilizes BACE1 immature protein, leading to increased steady-state levels in neurons. By acting on BACE1 expression, may regulate amyloid beta-peptide formation. N(6)-lysine acetylation in ER maintains protein homeostasis and regulates reticulophagy. In Homo sapiens (Human), this protein is N-acetyltransferase 8B.